A 428-amino-acid polypeptide reads, in one-letter code: Immunoglobulin superfamily containing leucine-rich repeat protein (428 aa).

The signal sequence occupies residues 1-18; it reads MQELRLLCLVVLVGLAQA. The region spanning 19–50 is the LRRNT domain; the sequence is CPEPCECGEKYGFHIADCAYRDLQAVPSGFPA. The N-linked (GlcNAc...) asparagine glycan is linked to asparagine 51. LRR repeat units lie at residues 51-72, 75-96, 99-122, 123-144, and 147-168; these read NVTT…AFRE, RLQS…ALAS, QLKS…HSLS, ALQL…AFRS, and ALRS…TFAP. In terms of domain architecture, LRRCT spans 180–231; it reads NPFDCTCGIVWFKTWALTTAVSIPEQDNITCTSPHVLKGTRLNRLLPLPCSA. One can recognise an Ig-like domain in the interval 232 to 343; the sequence is PSVQLTYQPS…GSAESSVNVA (112 aa). Cysteine 257 and cysteine 327 are disulfide-bonded. Residue asparagine 309 is glycosylated (N-linked (GlcNAc...) asparagine).

It localises to the secreted. The protein is Immunoglobulin superfamily containing leucine-rich repeat protein (ISLR) of Bos taurus (Bovine).